The chain runs to 447 residues: Adenylosuccinate synthetase (447 aa).

Residues 12–18 (GDEGKGK) and 40–42 (GHT) each bind GTP. Aspartate 13 functions as the Proton acceptor in the catalytic mechanism. Mg(2+) is bound by residues aspartate 13 and glycine 40. IMP contacts are provided by residues 13 to 16 (DEGK), 38 to 41 (NAGH), threonine 128, arginine 142, glutamine 223, threonine 238, and arginine 302. The Proton donor role is filled by histidine 41. 298–304 (TTTGRRR) contacts substrate. GTP-binding positions include arginine 304, 330-332 (KLD), and 412-414 (SLG).

The protein belongs to the adenylosuccinate synthetase family. In terms of assembly, homodimer. The cofactor is Mg(2+).

It localises to the cytoplasm. The enzyme catalyses IMP + L-aspartate + GTP = N(6)-(1,2-dicarboxyethyl)-AMP + GDP + phosphate + 2 H(+). Its pathway is purine metabolism; AMP biosynthesis via de novo pathway; AMP from IMP: step 1/2. Plays an important role in the de novo pathway of purine nucleotide biosynthesis. Catalyzes the first committed step in the biosynthesis of AMP from IMP. The sequence is that of Adenylosuccinate synthetase from Thermosynechococcus vestitus (strain NIES-2133 / IAM M-273 / BP-1).